Reading from the N-terminus, the 342-residue chain is MSAFTPASEVLLRHSDDFEQSRILFAGDLQDDLPARFECAASRAHTQQFHHWQVLSRQMGDNVRFSLVAQASDVADCDTLIYYWPKNKPEAQFQLMNILSLMPSGVDVFVVGENRSGVRSAEPMLADYAPLNKVDSARRCGLYHGRLEKQPQFSLESCWAEYNIDGLTIKTLPGVFSRDGLDVGSQLLLSTLTPHTKGKVLDVGCGAGVLSAALASHSPKVRLTLCDVSAPAVEASRATLAANGLEGEVFASNVFSEVKGRFDMIISNPPFHDGMQTSLDAAQTLIRGAVRHLNSGGELRIVANAFLPYPKILDETFGFHEVIAQTGRFKVYRTVMTRQAKK.

Belongs to the methyltransferase superfamily. RsmC family. As to quaternary structure, monomer.

The protein resides in the cytoplasm. It carries out the reaction guanosine(1207) in 16S rRNA + S-adenosyl-L-methionine = N(2)-methylguanosine(1207) in 16S rRNA + S-adenosyl-L-homocysteine + H(+). Specifically methylates the guanine in position 1207 of 16S rRNA in the 30S particle. The chain is Ribosomal RNA small subunit methyltransferase C from Salmonella gallinarum (strain 287/91 / NCTC 13346).